The chain runs to 80 residues: Sec-independent protein translocase protein TatA (80 aa).

Residues 1–21 traverse the membrane as a helical segment; it reads MGISMWQLLIVLLIIVLLFGT. The interval 39 to 80 is disordered; the sequence is KKAMSDGESEEDKEPKKLSQNESRTIEGSVERNDAKTESKHS. Over residues 67–80 the composition is skewed to basic and acidic residues; that stretch reads SVERNDAKTESKHS.

It belongs to the TatA/E family. The Tat system comprises two distinct complexes: a TatABC complex, containing multiple copies of TatA, TatB and TatC subunits, and a separate TatA complex, containing only TatA subunits. Substrates initially bind to the TatABC complex, which probably triggers association of the separate TatA complex to form the active translocon.

It localises to the cell inner membrane. In terms of biological role, part of the twin-arginine translocation (Tat) system that transports large folded proteins containing a characteristic twin-arginine motif in their signal peptide across membranes. TatA could form the protein-conducting channel of the Tat system. This chain is Sec-independent protein translocase protein TatA, found in Hahella chejuensis (strain KCTC 2396).